Here is a 176-residue protein sequence, read N- to C-terminus: Ribosome rescue factor SmrB (176 aa).

In terms of domain architecture, Smr spans 93-168 (LDLHGYRQSE…GDAALLVLID (76 aa)).

Belongs to the SmrB family. As to quaternary structure, associates with collided ribosomes, but not with correctly translating polysomes.

Its function is as follows. Acts as a ribosome collision sensor. Detects stalled/collided disomes (pairs of ribosomes where the leading ribosome is stalled and a second ribosome has collided with it) and endonucleolytically cleaves mRNA at the 5' boundary of the stalled ribosome. Stalled/collided disomes form a new interface (primarily via the 30S subunits) that binds SmrB. Cleaved mRNA becomes available for tmRNA ligation, leading to ribosomal subunit dissociation and rescue of stalled ribosomes. The polypeptide is Ribosome rescue factor SmrB (Shewanella putrefaciens (strain CN-32 / ATCC BAA-453)).